The primary structure comprises 351 residues: Outer membrane protein A (351 aa).

Residues 1–21 form the signal peptide; that stretch reads MKKTAIAIAVALAGFATVAQA. 8 beta stranded membrane passes run 27-37, 55-66, 70-78, 96-107, 112-120, 147-156, 161-168, and 187-195; these read TWYTGAKLGWS, QLGAGAFGGYQV, VGFEMGYDW, QGVQLTAKLGYP, LDIYTRLGG, PVFAGGVEWA, IATRLEYQ, and LLSLGVSYR. 4 repeat units span residues 206 to 207, 208 to 209, 210 to 211, and 212 to 213. The 4 X 2 AA tandem repeats of A-P stretch occupies residues 206 to 213; the sequence is APAPAPAP. The region spanning 215 to 343 is the OmpA-like domain; the sequence is VQTKHFTLKS…RVEIEVKGIK (129 aa). Cys316 and Cys328 are joined by a disulfide.

This sequence belongs to the outer membrane OOP (TC 1.B.6) superfamily. OmpA family. As to quaternary structure, monomer and homodimer.

It is found in the cell outer membrane. Functionally, with TolR probably plays a role in maintaining the position of the peptidoglycan cell wall in the periplasm. Acts as a porin with low permeability that allows slow penetration of small solutes; an internal gate slows down solute passage. In terms of biological role, required for conjugation with F-type plasmids; probably serves as the mating receptor on recipient cells. This Escherichia fergusonii (strain ATCC 35469 / DSM 13698 / CCUG 18766 / IAM 14443 / JCM 21226 / LMG 7866 / NBRC 102419 / NCTC 12128 / CDC 0568-73) protein is Outer membrane protein A.